We begin with the raw amino-acid sequence, 360 residues long: Uptake hydrogenase small subunit (360 aa).

Residues 1-46 (MATAETFYDVIRRQGITRRSFTKFCSLTAASLGFGPGAATAMAEAL) constitute a signal peptide (tat-type signal). 8 residues coordinate [4Fe-4S] cluster: C62, C65, C160, C194, H232, C235, C260, and C266. Residues C275, C294, and C297 each contribute to the [3Fe-4S] cluster site.

The protein belongs to the [NiFe]/[NiFeSe] hydrogenase small subunit family. Heterodimer of a large and a small subunit. The cofactor is [4Fe-4S] cluster. [3Fe-4S] cluster serves as cofactor. Post-translationally, predicted to be exported by the Tat system. The position of the signal peptide cleavage has not been experimentally proven.

It localises to the cell membrane. It carries out the reaction H2 + A = AH2. In terms of biological role, this enzyme recycles the H(2) produced by nitrogenase to increase the production of ATP and to protect nitrogenase against inhibition or damage by O(2) under carbon- or phosphate-limited conditions. The chain is Uptake hydrogenase small subunit (hupA) from Rhizobium leguminosarum bv. viciae.